The primary structure comprises 194 residues: Orotate phosphoribosyltransferase (194 aa).

5-phospho-alpha-D-ribose 1-diphosphate is bound at residue 117–125 (EDIVSTGLS). Orotate-binding residues include serine 121 and arginine 149.

The protein belongs to the purine/pyrimidine phosphoribosyltransferase family. PyrE subfamily. Homodimer. The cofactor is Mg(2+).

It catalyses the reaction orotidine 5'-phosphate + diphosphate = orotate + 5-phospho-alpha-D-ribose 1-diphosphate. The protein operates within pyrimidine metabolism; UMP biosynthesis via de novo pathway; UMP from orotate: step 1/2. In terms of biological role, catalyzes the transfer of a ribosyl phosphate group from 5-phosphoribose 1-diphosphate to orotate, leading to the formation of orotidine monophosphate (OMP). This chain is Orotate phosphoribosyltransferase, found in Maricaulis maris (strain MCS10) (Caulobacter maris).